Reading from the N-terminus, the 303-residue chain is Hydroxyacylglutathione hydrolase, mitochondrial (303 aa).

The Zn(2+) site is built by His97, His99, Asp101, His102, His153, and Asp177. Substrate-binding positions include 186–188 (KFF), 216–218 (HEY), and 292–295 (RKEK). A Zn(2+)-binding site is contributed by His216.

This sequence belongs to the metallo-beta-lactamase superfamily. Glyoxalase II family. As to quaternary structure, monomer. Zn(2+) serves as cofactor.

Its subcellular location is the mitochondrion matrix. It localises to the cytoplasm. The enzyme catalyses an S-(2-hydroxyacyl)glutathione + H2O = a 2-hydroxy carboxylate + glutathione + H(+). The catalysed reaction is (R)-S-lactoylglutathione + H2O = (R)-lactate + glutathione + H(+). Its function is as follows. Thiolesterase that catalyzes the hydrolysis of S-D-lactoyl-glutathione to form glutathione and D-lactic acid. This chain is Hydroxyacylglutathione hydrolase, mitochondrial (hagh), found in Danio rerio (Zebrafish).